The following is a 102-amino-acid chain: Small ribosomal subunit protein uS10 (102 aa).

The protein belongs to the universal ribosomal protein uS10 family. Part of the 30S ribosomal subunit.

Its function is as follows. Involved in the binding of tRNA to the ribosomes. The chain is Small ribosomal subunit protein uS10 from Kosmotoga olearia (strain ATCC BAA-1733 / DSM 21960 / TBF 19.5.1).